Consider the following 257-residue polypeptide: 3-deoxy-manno-octulosonate cytidylyltransferase (257 aa).

This sequence belongs to the KdsB family.

The protein localises to the cytoplasm. It catalyses the reaction 3-deoxy-alpha-D-manno-oct-2-ulosonate + CTP = CMP-3-deoxy-beta-D-manno-octulosonate + diphosphate. The protein operates within nucleotide-sugar biosynthesis; CMP-3-deoxy-D-manno-octulosonate biosynthesis; CMP-3-deoxy-D-manno-octulosonate from 3-deoxy-D-manno-octulosonate and CTP: step 1/1. Its pathway is bacterial outer membrane biogenesis; lipopolysaccharide biosynthesis. Its function is as follows. Activates KDO (a required 8-carbon sugar) for incorporation into bacterial lipopolysaccharide in Gram-negative bacteria. This Chromohalobacter salexigens (strain ATCC BAA-138 / DSM 3043 / CIP 106854 / NCIMB 13768 / 1H11) protein is 3-deoxy-manno-octulosonate cytidylyltransferase.